Here is a 1222-residue protein sequence, read N- to C-terminus: BOS complex subunit NOMO3 (1222 aa).

An N-terminal signal peptide occupies residues 1-31 (MLVGQGAGPLGPAVVTAAVVLLLSGVGPAHG). Topologically, residues 32–1155 (SEDIVVGCGG…NPTRKLPEQD (1124 aa)) are extracellular. N-linked (GlcNAc...) asparagine glycans are attached at residues Asn-50, Asn-218, and Asn-618. A helical transmembrane segment spans residues 1156–1176 (IAQGSYIALPLTLLVLLAGYN). Residues 1177-1222 (HDKLIPLLLQLTSRLQGVGALGQAASDNSGPEDAKRQAKKQKTRRT) are Cytoplasmic-facing. The interval 1198–1222 (GQAASDNSGPEDAKRQAKKQKTRRT) is disordered. Basic residues predominate over residues 1213–1222 (QAKKQKTRRT).

As to quaternary structure, component of the back of Sec61 (BOS) complex, composed of NCLN/Nicalin, NOMO (NOMO1, NOMO2 or NOMO3) and TMEM147. The BOS complex is part of the multi-pass translocon (MPT) complex, composed of three subcomplexes, the GEL complex (composed of RAB5IF/OPTI and TMCO1), the BOS complex (composed of NCLN/Nicalin, NOMO and TMEM147) and the PAT complex (composed of WDR83OS/Asterix and CCDC47). The MPT complex associates with the SEC61 complex. Due to the strong similarity between NOMO1, NOMO2 and NOMO3, similar interaction pattern probably occur for the three gene copies.

It is found in the endoplasmic reticulum membrane. Its function is as follows. Component of the multi-pass translocon (MPT) complex that mediates insertion of multi-pass membrane proteins into the lipid bilayer of membranes. The MPT complex takes over after the SEC61 complex: following membrane insertion of the first few transmembrane segments of proteins by the SEC61 complex, the MPT complex occludes the lateral gate of the SEC61 complex to promote insertion of subsequent transmembrane regions. The protein is BOS complex subunit NOMO3 (NOMO3) of Homo sapiens (Human).